We begin with the raw amino-acid sequence, 1062 residues long: NACHT, LRR and PYD domains-containing protein 2 (1062 aa).

Positions 1-94 (MVSSAQMGFN…SERAKDEVRE (94 aa)) constitute a Pyrin domain. In terms of domain architecture, NACHT spans 207 to 526 (YTVVLYGPAG…LEKEEEEDRD (320 aa)). 213–220 (GPAGLGKT) contributes to the ATP binding site. Position 671 is a phosphoserine (Ser-671). LRR repeat units lie at residues 812 to 832 (SLTC…KLLY), 841 to 861 (FLQR…KDLA), 869 to 889 (ELTH…KFLC), 898 to 918 (KLQT…CDLT), 926 to 946 (SLLC…KFLC), 955 to 976 (NLRC…DLCS), 983 to 1003 (SLVT…KMLF), and 1010 to 1033 (SGTL…LLEE).

This sequence belongs to the NLRP family. Interacts with CHUK. Interacts with IKBKB. Interacts with IKBKG. Interacts with MEFV. Interacts with PYCARD. Interacts (via pyrin domain) with PYDC2. Interacts with CARD8. In terms of tissue distribution, expressed at high levels in lung, placenta and thymus and at lower levels in ovary, intestine and brain. Highly abundant in oocytes and early embryos, however poorly expressed in somatic tissues such as brain, kidney, liver and spinal cord.

It is found in the cytoplasm. Functionally, suppresses TNF- and CD40-induced NFKB1 activity at the level of the IKK complex, by inhibiting NFKBIA degradation induced by TNF. When associated with PYCARD, activates CASP1, leading to the secretion of mature pro-inflammatory cytokine IL1B. May be a component of the inflammasome, a protein complex which also includes PYCARD, CARD8 and CASP1 and whose function would be the activation of pro-inflammatory caspases. The sequence is that of NACHT, LRR and PYD domains-containing protein 2 (NLRP2) from Homo sapiens (Human).